The following is a 105-amino-acid chain: Probable non-functional immunoglobulin lambda variable 5-48 (105 aa).

Residues 1–19 (MAWTPLLLLFLSHCTGSLS) form the signal peptide. Residues 20-44 (QAVLTQPTSLSASPGASARLTCTLR) are framework-1. Positions 20–105 (QAVLTQPTSL…NAGILFISGL (86 aa)) constitute an Ig-like domain. The tract at residues 45–53 (SGISVGSYR) is complementarity-determining-1. The segment at 54–70 (IYWYQQKPGSPPRYLLN) is framework-2. Residues 71–77 (YYSDSDK) are complementarity-determining-2. The interval 78–105 (HQGSGVPSRFSGSKDASTNAGILFISGL) is framework-3.

Immunoglobulins are composed of two identical heavy chains and two identical light chains; disulfide-linked.

It is found in the secreted. Its subcellular location is the cell membrane. In terms of biological role, probable non-functional open reading frame (ORF) of V region of the variable domain of immunoglobulin light chains. Non-functional ORF generally cannot participate in the synthesis of a productive immunoglobulin chain due to altered V-(D)-J or switch recombination and/or splicing site (at mRNA level) and/or conserved amino acid change (protein level). Immunoglobulins, also known as antibodies, are membrane-bound or secreted glycoproteins produced by B lymphocytes. In the recognition phase of humoral immunity, the membrane-bound immunoglobulins serve as receptors which, upon binding of a specific antigen, trigger the clonal expansion and differentiation of B lymphocytes into immunoglobulins-secreting plasma cells. Secreted immunoglobulins mediate the effector phase of humoral immunity, which results in the elimination of bound antigens. The antigen binding site is formed by the variable domain of one heavy chain, together with that of its associated light chain. Thus, each immunoglobulin has two antigen binding sites with remarkable affinity for a particular antigen. The variable domains are assembled by a process called V-(D)-J rearrangement and can then be subjected to somatic hypermutations which, after exposure to antigen and selection, allow affinity maturation for a particular antigen. In Homo sapiens (Human), this protein is Probable non-functional immunoglobulin lambda variable 5-48.